We begin with the raw amino-acid sequence, 152 residues long: 3-dehydroquinate dehydratase (152 aa).

Residue tyrosine 26 is the Proton acceptor of the active site. Substrate contacts are provided by asparagine 77, histidine 83, and aspartate 90. Histidine 103 (proton donor) is an active-site residue. Substrate-binding positions include 104 to 105 (LS) and arginine 114.

This sequence belongs to the type-II 3-dehydroquinase family. Homododecamer.

The catalysed reaction is 3-dehydroquinate = 3-dehydroshikimate + H2O. The protein operates within metabolic intermediate biosynthesis; chorismate biosynthesis; chorismate from D-erythrose 4-phosphate and phosphoenolpyruvate: step 3/7. Its function is as follows. Catalyzes a trans-dehydration via an enolate intermediate. In Synechocystis sp. (strain ATCC 27184 / PCC 6803 / Kazusa), this protein is 3-dehydroquinate dehydratase (aroQ).